Consider the following 749-residue polypeptide: RNA-binding protein 5-B (749 aa).

Residues 1-88 (MGSDKRVSRS…YHSDGDYMDH (88 aa)) form a disordered region. In terms of domain architecture, RRM 1 spans 102 to 182 (KTIMLRGLPI…KTIAMHYSNP (81 aa)). The RanBP2-type zinc-finger motif lies at 185 to 214 (KFEDWLCNKCGLYNFRRRLKCFRCGAAKAE). An RRM 2 domain is found at 241 to 325 (SAIILRNIGP…KTIGVDFAKS (85 aa)). Disordered stretches follow at residues 425–471 (QMYQ…SVPD), 520–558 (PAAD…AQQI), 570–595 (NKQK…ESAA), and 626–680 (TEEE…NSNI). Over residues 429-460 (QPGSPTQSGTSTAASTTPASTTSTEEATTPTA) the composition is skewed to low complexity. Basic and acidic residues-rich tracts occupy residues 585–594 (SRDEERKESA) and 627–648 (EEEK…EKYG). The G-patch domain maps to 677-723 (NSNIGNKMLQAMGWKEGSGLGRKSQGITAPIQAQVRMRGAGLGAKGS).

It belongs to the RBM5/RBM10 family. Component of the spliceosome A complex (also known as the prespliceosome). Appears to dissociate from the spliceosome upon formation of the spliceosome B complex (also known as the precatalytic spliceosome), in which the heterotrimeric U4/U6.U5 snRNPs are bound.

The protein localises to the nucleus. Component of the spliceosome A complex. Regulates alternative splicing of a number of mRNAs. May modulate splice site pairing after recruitment of the U1 and U2 snRNPs to the 5' and 3' splice sites of the intron. The sequence is that of RNA-binding protein 5-B (rbm5-b) from Xenopus laevis (African clawed frog).